The following is a 123-amino-acid chain: MFAVIKTGGKQYRVAADDVITIEKLEGVAGDKIEFTEILMVGVGADATIGAPFVEGAVVSAEVVDQGRAKKVIAFKKRRRQNSKRSRGHRQHQTVVRILDIAAAGGKAKKASKKTEAAAEAAN.

This sequence belongs to the bacterial ribosomal protein bL21 family. As to quaternary structure, part of the 50S ribosomal subunit. Contacts protein L20.

This protein binds to 23S rRNA in the presence of protein L20. This Sinorhizobium fredii (strain NBRC 101917 / NGR234) protein is Large ribosomal subunit protein bL21.